An 836-amino-acid polypeptide reads, in one-letter code: Ethylene receptor 3 (836 aa).

A run of 3 helical transmembrane segments spans residues 137–157 (LIAA…AGLR), 166–186 (LVQF…TAFT), and 204–224 (LTAL…PQLL). 2 residues coordinate Cu cation: Cys-176 and His-180. In terms of domain architecture, GAF spans 269-413 (DRHTVLYTTL…VVAGQVAVAL (145 aa)). A coiled-coil region spans residues 416 to 452 (ATLLEESRAMRDRLAEQNRELLQARRDALMANEARQA). The Histidine kinase domain maps to 457–691 (MSQGMRRPIH…LVLRFQLQSP (235 aa)). Positions 718-834 (LLIDDDDDIN…LKDELARILQ (117 aa)) constitute a Response regulatory domain.

It belongs to the ethylene receptor family. Cu cation is required as a cofactor.

Its subcellular location is the endoplasmic reticulum membrane. It carries out the reaction ATP + protein L-histidine = ADP + protein N-phospho-L-histidine.. Its function is as follows. Ethylene receptor related to bacterial two-component regulators. Acts as a negative regulator of ethylene signaling. May delay the transition from the vegetative stage to the floral stage by up-regulating GI (GIGANTEA) and RCN1 and cause starch accumulation in stems by down-regulating the alpha-amylase AMY3D. This chain is Ethylene receptor 3 (ETR3), found in Oryza sativa subsp. japonica (Rice).